A 2203-amino-acid chain; its full sequence is Voltage-dependent L-type calcium channel subunit alpha-1D (2203 aa).

Disordered stretches follow at residues 1 to 51 and 64 to 100; these read MMMM…QTVL and KAAQTMSTSAPPPVGSLSQRKRQQYAKSKKQGNSSNS. Topologically, residues 1-126 are cytoplasmic; it reads MMMMMMMKKM…RACISIVDWK (126 aa). Over residues 38–51 the composition is skewed to polar residues; it reads GPTSQPNSSKQTVL. The segment covering 82-93 has biased composition (basic residues); sequence QRKRQQYAKSKK. One copy of the I repeat lies at 112-408; the sequence is NNPIRRACIS…NLVLGVLSGE (297 aa). Residues 127–145 form a helical membrane-spanning segment; sequence PFDIFILLAIFANCVALAI. Residues 146 to 163 lie on the Extracellular side of the membrane; it reads YIPFPEDDSNSTNHNLEK. The N-linked (GlcNAc...) asparagine glycan is linked to asparagine 155. A helical membrane pass occupies residues 164–183; the sequence is VEYAFLIIFTVETFLKIIAS. Over 184 to 195 the chain is Cytoplasmic; the sequence is GLLLHPNASVRN. Residues 196–214 form a helical membrane-spanning segment; the sequence is GWNLLDFVIVIVGLFSVIL. The Extracellular segment spans residues 215-235; the sequence is EQLTKETEGGNHSSGKSGGFD. The N-linked (GlcNAc...) asparagine glycan is linked to asparagine 225. The chain crosses the membrane as a helical span at residues 236-254; sequence VKALRAFRVLRPLRLVSGV. Topologically, residues 255-273 are cytoplasmic; it reads PSLQVVLNSIIKAMVPLLH. A helical transmembrane segment spans residues 274 to 293; it reads IALLVLFVIIIYAIIGLELF. The Extracellular segment spans residues 294 to 381; the sequence is IGKMHKTCFF…WVNDAIGWEW (88 aa). N-linked (GlcNAc...) asparagine glycosylation is present at asparagine 329. Glutamate 364 is a binding site for Ca(2+). A helical transmembrane segment spans residues 382–406; the sequence is PWVYFVSLIILGSFFVLNLVLGVLS. Residues 407–582 lie on the Cytoplasmic side of the membrane; sequence GEFSKEREKA…RRCRAAVKSV (176 aa). Positions 429–446 are binding to the beta subunit; sequence QQLEEDLKGYLDWITQAE. Residues 449 to 480 are disordered; sequence DPENEEEGGEEGKRNTSMPTSETESVNTENVS. The segment covering 463 to 479 has biased composition (polar residues); sequence NTSMPTSETESVNTENV. The II repeat unit spans residues 528–774; sequence EALCVCRCSL…DWNAVMYDGI (247 aa). The chain crosses the membrane as a helical span at residues 583-602; that stretch reads TFYWLVIVLVFLNTLTISSE. Over 603 to 617 the chain is Extracellular; the sequence is HYNQPDWLTQIQDIA. The chain crosses the membrane as a helical span at residues 618–636; that stretch reads NKVLLALFTCEMLVKMYSL. Over 637–644 the chain is Cytoplasmic; it reads GLQAYFVS. The helical transmembrane segment at 645-663 threads the bilayer; it reads LFNRFDCFVVCGGITETIL. Residues 664 to 673 lie on the Extracellular side of the membrane; that stretch reads VELELMSPLG. A helical transmembrane segment spans residues 674 to 692; the sequence is VSVFRCVRLLRIFKVTRHW. Over 693–711 the chain is Cytoplasmic; it reads TSLSNLVASLLNSMKSIAS. The helical transmembrane segment at 712-732 threads the bilayer; it reads LLLLLFLFIIIFSLLGMQLFG. Topologically, residues 733–786 are extracellular; sequence GKFNFDETQTKRSTFDNFPQALLTVFQILTGEDWNAVMYDGIMAYGGPSSSGMI. Glutamate 764 serves as a coordination point for Ca(2+). The helical transmembrane segment at 787 to 811 threads the bilayer; the sequence is VCIYFIILFICGNYILLKLFLAIAV. Over 812–945 the chain is Cytoplasmic; it reads DNLADAESLN…VGCHKLINHH (134 aa). The disordered stretch occupies residues 822–909; the sequence is TAQKEEAEEK…AGPRPRRISE (88 aa). Basic and acidic residues predominate over residues 824–849; it reads QKEEAEEKERKKIARKESLENKKNNK. Polar residues predominate over residues 850-861; sequence PEVNQIANSDNK. Acidic residues predominate over residues 884–897; it reads VGEEEEEEEEDEPE. The stretch at 892–1174 is one III repeat; it reads EEDEPEVPAG…LLYKAIDSNG (283 aa). A helical membrane pass occupies residues 946–964; that stretch reads IFTNLILVFIMLSSAALAA. Over 965–980 the chain is Extracellular; the sequence is EDPIRSHSFRNTILGY. A helical transmembrane segment spans residues 981 to 1000; the sequence is FDYAFTAIFTVEILLKMTTF. Over 1001–1012 the chain is Cytoplasmic; sequence GAFLHKGAFCRN. A helical membrane pass occupies residues 1013–1031; the sequence is YFNLLDMLVVGVSLVSFGI. Residues 1032–1037 are Extracellular-facing; sequence QSSAIS. The chain crosses the membrane as a helical span at residues 1038–1057; that stretch reads VVKILRVLRVLRPLRAINRA. Topologically, residues 1058 to 1076 are cytoplasmic; it reads KGLKHVVQCVFVAIRTIGN. The chain crosses the membrane as a helical span at residues 1077 to 1096; sequence IMIVTTLLQFMFACIGVQLF. Topologically, residues 1097–1186 are extracellular; that stretch reads KGKFYRCTDE…VGPVYNYRVE (90 aa). Positions 1134–1224 are dihydropyridine binding; sequence RIWQNSDFNF…QEQGEKEYKN (91 aa). Glutamate 1160 is a binding site for Ca(2+). A helical transmembrane segment spans residues 1187–1207; the sequence is ISIFFIIYIIIVAFFMMNIFV. Residues 1208–1264 are Cytoplasmic-facing; sequence GFVIVTFQEQGEKEYKNCELDKNQRQCVEYALKARPLRRYIPKNPYQYKFWYVVNSS. The IV repeat unit spans residues 1211-1486; the sequence is IVTFQEQGEK…YTCGSNFAIV (276 aa). The helical transmembrane segment at 1265–1283 threads the bilayer; that stretch reads PFEYMMFVLIMLNTLCLAM. Residues 1284-1298 are Extracellular-facing; that stretch reads QHYEQSKMFNDAMDI. The helical transmembrane segment at 1299–1318 threads the bilayer; the sequence is LNMVFTGVFTVEMVLKVIAF. At 1319–1325 the chain is on the cytoplasmic side; that stretch reads KPKGYFS. A helical membrane pass occupies residues 1326-1347; sequence DAWNTFDSLIVIGSIIDVALSE. Residues 1348–1357 lie on the Extracellular side of the membrane; that stretch reads ADNSEESNRI. The chain crosses the membrane as a helical span at residues 1358-1377; that stretch reads SITFFRLFRVMRLVKLLSRG. Residues 1378 to 1396 lie on the Cytoplasmic side of the membrane; the sequence is EGIRTLLWTFIKSFQALPY. Residues 1397 to 1416 traverse the membrane as a helical segment; it reads VALLIAMLFFIYAVIGMQMF. Residues 1417 to 1483 are Extracellular-facing; sequence GKVAMRDNNQ…GEEYTCGSNF (67 aa). Residues 1464-1530 form a dihydropyridine binding region; the sequence is LCDPDSDYNP…LGPHHLDEFK (67 aa). A phenylalkylamine binding region spans residues 1476 to 1519; that stretch reads EYTCGSNFAIVYFISFYMLCAFLIINLFVAVIMDNFDYLTRDWS. The helical transmembrane segment at 1484–1508 threads the bilayer; that stretch reads AIVYFISFYMLCAFLIINLFVAVIM. At 1509–2203 the chain is on the cytoplasmic side; it reads DNFDYLTRDW…ADEMICITTL (695 aa). Disordered regions lie at residues 1734 to 1766, 1795 to 1816, 1920 to 1963, and 2176 to 2195; these read NHVNSDRRESLQQTNTTHRPLHVQRPSIPPASD, TSTNANLNNANMSKAAHGKRPS, FERP…HRRS, and GPGYSDEEPDPGREEEDLAD. The span at 1795-1806 shows a compositional bias: polar residues; the sequence is TSTNANLNNANM. Acidic residues predominate over residues 2180 to 2195; sequence SDEEPDPGREEEDLAD.

Belongs to the calcium channel alpha-1 subunit (TC 1.A.1.11) family. CACNA1D subfamily. As to quaternary structure, voltage-dependent calcium channels are multisubunit complexes, consisting of alpha-1, alpha-2, beta and delta subunits in a 1:1:1:1 ratio. The channel activity is directed by the pore-forming and voltage-sensitive alpha-1 subunit. In many cases, this subunit is sufficient to generate voltage-sensitive calcium channel activity. The auxiliary subunits beta and alpha-2/delta linked by a disulfide bridge regulate the channel activity. Interacts with CABP1 and CABP4, resulting in a near elimination of calcium-dependent inactivation of the channel. Interacts with RIMBP2. As to expression, expressed in brain, pancreatic islets and B-lymphocytes.

The protein resides in the membrane. The catalysed reaction is Ca(2+)(in) = Ca(2+)(out). Functionally, voltage-sensitive calcium channels (VSCC) mediate the entry of calcium ions into excitable cells and are also involved in a variety of calcium-dependent processes, including muscle contraction, hormone or neurotransmitter release, gene expression, cell motility, cell division and cell death. The isoform alpha-1D gives rise to L-type calcium currents. Long-lasting (L-type) calcium channels belong to the 'high-voltage activated' (HVA) group. They are blocked by dihydropyridines (DHP), phenylalkylamines, and by benzothiazepines. Voltage-sensitive calcium channels (VSCC) mediate the entry of calcium ions into excitable cells and are also involved in a variety of calcium-dependent processes, including muscle contraction, hormone or neurotransmitter release, gene expression, cell motility, cell division and cell death. The isoform alpha-1D gives rise to L-type calcium currents. The polypeptide is Voltage-dependent L-type calcium channel subunit alpha-1D (Cacna1d) (Rattus norvegicus (Rat)).